The sequence spans 313 residues: Porphobilinogen deaminase (313 aa).

Cys-242 bears the S-(dipyrrolylmethanemethyl)cysteine mark.

The protein belongs to the HMBS family. Monomer. Dipyrromethane is required as a cofactor.

The catalysed reaction is 4 porphobilinogen + H2O = hydroxymethylbilane + 4 NH4(+). It functions in the pathway porphyrin-containing compound metabolism; protoporphyrin-IX biosynthesis; coproporphyrinogen-III from 5-aminolevulinate: step 2/4. In terms of biological role, tetrapolymerization of the monopyrrole PBG into the hydroxymethylbilane pre-uroporphyrinogen in several discrete steps. The sequence is that of Porphobilinogen deaminase from Yersinia pseudotuberculosis serotype O:1b (strain IP 31758).